A 321-amino-acid chain; its full sequence is MASETFYKVGDGEEAMLKKETLNVLNALDQMSKPFPNPKSMNRTVTTKSLPLSSRGSLVNFLEEDAINLPKHMPLEDSECSSDDTSISPMSSTLLNPIKLAVTQPNSRFFAGMLEGELNKLSLSSIAKSTEKGHLALCPQSKSQMAPGGLLDFDNPEVDTDTSSTPSESSVVLDVPEAPFVCEHTVSDSTAVISWTYAPGKQQVSFYQVLLQEVVRKNSGETPKAKNRPWIFNKILGTTVKLMELKPNTSYCLTVRAANTAGVGTWCKPYKFATVATDLNSFPENNPIQITVQRKEPQRKTVSLGLEDMRRLEDLEHLFPY.

The region spanning 175 to 277 (VPEAPFVCEH…KPYKFATVAT (103 aa)) is the Fibronectin type-III domain.

The sequence is that of Fibronectin type III domain-containing protein 8 (FNDC8) from Bos taurus (Bovine).